The sequence spans 844 residues: Janus kinase and microtubule-interacting protein 3 (844 aa).

Residues 8–259 adopt a coiled-coil conformation; that stretch reads SRAKGDKAET…LSQAKEAERH (252 aa). Residues 249 to 290 form a disordered region; that stretch reads QLSQAKEAERHPGSPRRELPYASGAGDASDHSGSPEQQLDEK. A compositionally biased stretch (basic and acidic residues) spans 254–267; the sequence is KEAERHPGSPRREL. Residues 270–282 are compositionally biased toward low complexity; it reads ASGAGDASDHSGS. A coiled-coil region spans residues 289-421; that stretch reads EKDARRFQLK…DELSKTLETA (133 aa). The residue at position 384 (Ser384) is a Phosphoserine. The segment covering 466–483 has biased composition (polar residues); the sequence is SDGSSISYQTDRTDQTPC. Residues 466–488 are disordered; that stretch reads SDGSSISYQTDRTDQTPCTPEDD. Coiled coils occupy residues 493 to 621 and 688 to 833; these read MAKE…RERK and EKWL…LFLF.

Belongs to the JAKMIP family.

The protein resides in the golgi apparatus. This Mus musculus (Mouse) protein is Janus kinase and microtubule-interacting protein 3 (Jakmip3).